The chain runs to 179 residues: Large ribosomal subunit protein uL5 (179 aa).

This sequence belongs to the universal ribosomal protein uL5 family. In terms of assembly, part of the 50S ribosomal subunit; part of the 5S rRNA/L5/L18/L25 subcomplex. Contacts the 5S rRNA and the P site tRNA. Forms a bridge to the 30S subunit in the 70S ribosome.

This is one of the proteins that bind and probably mediate the attachment of the 5S RNA into the large ribosomal subunit, where it forms part of the central protuberance. In the 70S ribosome it contacts protein S13 of the 30S subunit (bridge B1b), connecting the 2 subunits; this bridge is implicated in subunit movement. Contacts the P site tRNA; the 5S rRNA and some of its associated proteins might help stabilize positioning of ribosome-bound tRNAs. This Shewanella piezotolerans (strain WP3 / JCM 13877) protein is Large ribosomal subunit protein uL5.